The chain runs to 119 residues: V-type proton ATPase subunit F (119 aa).

Belongs to the V-ATPase F subunit family. As to quaternary structure, V-ATPase is a heteromultimeric enzyme made up of two complexes: the ATP-hydrolytic V1 complex and the proton translocation V0 complex. The V1 complex consists of three catalytic AB heterodimers that form a heterohexamer, three peripheral stalks each consisting of EG heterodimers, one central rotor including subunits D and F, and the regulatory subunits C and H. The proton translocation complex V0 consists of the proton transport subunit a, a ring of proteolipid subunits c9c'', rotary subunit d, subunits e and f, and the accessory subunits ATP6AP1/Ac45 and ATP6AP2/PRR.

The protein resides in the cytoplasmic vesicle. The protein localises to the secretory vesicle. Its subcellular location is the synaptic vesicle membrane. It is found in the clathrin-coated vesicle membrane. In terms of biological role, subunit of the V1 complex of vacuolar(H+)-ATPase (V-ATPase), a multisubunit enzyme composed of a peripheral complex (V1) that hydrolyzes ATP and a membrane integral complex (V0) that translocates protons. V-ATPase is responsible for acidifying and maintaining the pH of intracellular compartments and in some cell types, is targeted to the plasma membrane, where it is responsible for acidifying the extracellular environment. The protein is V-type proton ATPase subunit F (ATP6V1F) of Homo sapiens (Human).